A 357-amino-acid chain; its full sequence is Protein RecA (357 aa).

73–80 (GPESSGKT) contacts ATP.

This sequence belongs to the RecA family.

Its subcellular location is the cytoplasm. Functionally, can catalyze the hydrolysis of ATP in the presence of single-stranded DNA, the ATP-dependent uptake of single-stranded DNA by duplex DNA, and the ATP-dependent hybridization of homologous single-stranded DNAs. It interacts with LexA causing its activation and leading to its autocatalytic cleavage. The polypeptide is Protein RecA (Nitratidesulfovibrio vulgaris (strain DSM 19637 / Miyazaki F) (Desulfovibrio vulgaris)).